The following is a 301-amino-acid chain: Probable alpha-L-glutamate ligase 1 (301 aa).

Positions 104-287 constitute an ATP-grasp domain; sequence MQLMSRRGIG…VAGAIIAFIE (184 aa). Residues Lys-141, 178–179, Asp-187, and 211–213 each bind ATP; these read EY and RSN. Residues Asp-248, Glu-260, and Asn-262 each contribute to the Mg(2+) site. Mn(2+) contacts are provided by Asp-248, Glu-260, and Asn-262.

This sequence belongs to the RimK family. Mg(2+) serves as cofactor. It depends on Mn(2+) as a cofactor.

The sequence is that of Probable alpha-L-glutamate ligase 1 from Shewanella amazonensis (strain ATCC BAA-1098 / SB2B).